Here is a 700-residue protein sequence, read N- to C-terminus: Dymeclin (700 aa).

Glycine 2 carries N-myristoyl glycine lipidation. The residue at position 347 (serine 347) is a Phosphoserine.

The protein belongs to the dymeclin family.

This is Dymeclin from Drosophila pseudoobscura pseudoobscura (Fruit fly).